The sequence spans 131 residues: Small ribosomal subunit protein uS8 (131 aa).

This sequence belongs to the universal ribosomal protein uS8 family. In terms of assembly, part of the 30S ribosomal subunit. Contacts proteins S5 and S12.

Functionally, one of the primary rRNA binding proteins, it binds directly to 16S rRNA central domain where it helps coordinate assembly of the platform of the 30S subunit. The protein is Small ribosomal subunit protein uS8 of Novosphingobium aromaticivorans (strain ATCC 700278 / DSM 12444 / CCUG 56034 / CIP 105152 / NBRC 16084 / F199).